An 826-amino-acid polypeptide reads, in one-letter code: Ubiquitin carboxyl-terminal hydrolase 16 (826 aa).

Residues 22 to 142 form a UBP-type zinc finger; it reads PMCRHIRKGL…QVVDYVRKQA (121 aa). Residues C24, H26, C48, C51, C74, C77, C82, H90, H94, H103, C116, and C119 each contribute to the Zn(2+) site. K140 participates in a covalent cross-link: Glycyl lysine isopeptide (Lys-Gly) (interchain with G-Cter in SUMO2). Residues 146-190 form a disordered region; that stretch reads TPKPAEKDNGNIELENKKLEKESKNEQEREKKENMAKENPPMNSP. The span at 149–181 shows a compositional bias: basic and acidic residues; that stretch reads PAEKDNGNIELENKKLEKESKNEQEREKKENMA. Position 189 is a phosphoserine (S189). The region spanning 196-825 is the USP domain; it reads KGLSNLGNTC…QAYLLFYERI (630 aa). C205 acts as the Nucleophile in catalysis. Residues 394-408 show a composition bias toward basic and acidic residues; it reads SGKKSVNDKNLKKTM. The tract at residues 394–460 is disordered; sequence SGKKSVNDKN…AKNQRRQQKI (67 aa). Over residues 409-420 the composition is skewed to acidic residues; the sequence is EDEDQDSEEEKD. Residue S415 is modified to Phosphoserine. Basic and acidic residues predominate over residues 421 to 430; the sequence is NDSYIKERSD. Over residues 438–458 the composition is skewed to basic residues; the sequence is HLQKKAKKQAKKQAKNQRRQQ. S552 carries the phosphoserine modification. T557 carries the post-translational modification Phosphothreonine. H761 acts as the Proton acceptor in catalysis.

It belongs to the peptidase C19 family. USP16 subfamily. Homotetramer. Associates with late pre-40S ribosomes. Interacts with CEP78; promoting deubiquitination of tektins. Post-translationally, phosphorylated at the onset of mitosis and dephosphorylated during the metaphase/anaphase transition. Phosphorylation by AURKB enhances the deubiquitinase activity.

It localises to the nucleus. The catalysed reaction is Thiol-dependent hydrolysis of ester, thioester, amide, peptide and isopeptide bonds formed by the C-terminal Gly of ubiquitin (a 76-residue protein attached to proteins as an intracellular targeting signal).. In terms of biological role, specifically deubiquitinates 'Lys-120' of histone H2A (H2AK119Ub), a specific tag for epigenetic transcriptional repression, thereby acting as a coactivator. Deubiquitination of histone H2A is a prerequisite for subsequent phosphorylation at 'Ser-11' of histone H3 (H3S10ph), and is required for chromosome segregation when cells enter into mitosis. In resting B- and T-lymphocytes, phosphorylation by AURKB leads to enhance its activity, thereby maintaining transcription in resting lymphocytes. Regulates Hox gene expression via histone H2A deubiquitination. Prefers nucleosomal substrates. Does not deubiquitinate histone H2B. Also deubiquitinates non-histone proteins, such as ribosomal protein RPS27A: deubiquitination of monoubiquitinated RPS27A promotes maturation of the 40S ribosomal subunit. Also mediates deubiquitination of tektin proteins (TEKT1, TEKT2, TEK3, TEKT4 and TEKT5), promoting their stability. The chain is Ubiquitin carboxyl-terminal hydrolase 16 from Macaca fascicularis (Crab-eating macaque).